The sequence spans 270 residues: uncharacterized protein (270 aa).

Disordered regions lie at residues 35–67 (IKQD…GGNK) and 168–204 (SNNN…DNSN). Over residues 39–48 (NNNNNNNNTN) the composition is skewed to low complexity. Positions 49–67 (VSLSPSIKSQATSSTGGNK) are enriched in polar residues. A compositionally biased stretch (low complexity) spans 168-191 (SNNNNNNNNNNNNNNNNNNNNNNN).

This is an uncharacterized protein from Dictyostelium discoideum (Social amoeba).